A 371-amino-acid polypeptide reads, in one-letter code: Ecto-ADP-ribosyltransferase 3 (371 aa).

A signal peptide spans 1 to 26; the sequence is MKMGHFEMVTTLLAAAVLMDIFQVKA. A disulfide bridge links Cys43 with Cys255. Residues 64-250 enclose the TR mART core domain; sequence ALLRMVWDNA…LVLQSINSTC (187 aa). NAD(+)-binding residues include Tyr101 and Asn182. Residues 306–346 are disordered; that stretch reads VLQTEENPLLPDEKPDRSRGKANNPTPGLVPGPKSHPSASS. The GPI-anchor amidated serine moiety is linked to residue Ser345. The propeptide at 346 to 371 is removed in mature form; that stretch reads SGNTLLPSVMASTILLVASAVNFIEL.

Belongs to the Arg-specific ADP-ribosyltransferase family.

The protein resides in the cell membrane. It catalyses the reaction L-arginyl-[protein] + NAD(+) = N(omega)-(ADP-D-ribosyl)-L-arginyl-[protein] + nicotinamide + H(+). The chain is Ecto-ADP-ribosyltransferase 3 (Art3) from Mus musculus (Mouse).